The primary structure comprises 330 residues: DNA-directed RNA polymerase subunit alpha (330 aa).

Residues M1–E231 form an alpha N-terminal domain (alpha-NTD) region. Residues M253 to E330 are alpha C-terminal domain (alpha-CTD).

The protein belongs to the RNA polymerase alpha chain family. Homodimer. The RNAP catalytic core consists of 2 alpha, 1 beta, 1 beta' and 1 omega subunit. When a sigma factor is associated with the core the holoenzyme is formed, which can initiate transcription.

It carries out the reaction RNA(n) + a ribonucleoside 5'-triphosphate = RNA(n+1) + diphosphate. Functionally, DNA-dependent RNA polymerase catalyzes the transcription of DNA into RNA using the four ribonucleoside triphosphates as substrates. The protein is DNA-directed RNA polymerase subunit alpha of Flavobacterium psychrophilum (strain ATCC 49511 / DSM 21280 / CIP 103535 / JIP02/86).